The chain runs to 389 residues: MFSPDGGLPAAPFGLLPDGGPPFPRGGYDGAAAQQLFFPFASEPDGARDAATARAWLPPPAGPPAKAEARPARPCRQGSPEPRAAPPATPCCGPAWAAPPWPGPAPPAATAVPGPPFPGPAAAAFPAAPGHALCPAALQPSSGGLANLGSSGSSSGAASEGGHSSDSGDEDAPTSEELEQFAKDLKHKRIMLGFTQADVGLALGTLYGKMFSQTTICRFEALQLSFKNMCKLKPLLQRWLNEAENTDNMQEMCNAEQVLAQARKRKRRTSIETNVKGTLESFFRKCVKPSPQEISQIAEDLNLDKDVVRVWFCNRRQKGKRLLLPFGNESEGVMYDMNQSLVPPGLPIPVTSQGYSLAPSPPVYMPPFHKAEMFPPPLQPGISMNNSSH.

2 stretches are compositionally biased toward low complexity: residues 1 to 18 (MFSP…LLPD) and 145 to 165 (LANL…GHSS). Disordered stretches follow at residues 1 to 88 (MFSP…APPA) and 145 to 177 (LANL…TSEE). The span at 167–177 (SGDEDAPTSEE) shows a compositional bias: acidic residues. A POU-specific domain is found at 170–244 (EDAPTSEELE…LLQRWLNEAE (75 aa)). Residues 264–323 (KRKRRTSIETNVKGTLESFFRKCVKPSPQEISQIAEDLNLDKDVVRVWFCNRRQKGKRLL) constitute a DNA-binding region (homeobox).

The protein belongs to the POU transcription factor family.

It is found in the nucleus. In terms of biological role, required for the maintenance of pluripotency and self-renewal of embryonic stem cells. Transcriptional activator that binds the DNA consensus sequence 5'-ATGCAAAT-3'. This Gallus gallus (Chicken) protein is POU domain, class 5, transcription factor 3 (POU5F3).